The following is a 191-amino-acid chain: Molybdenum cofactor guanylyltransferase (191 aa).

GTP contacts are provided by residues 11–13 (LCG), lysine 23, aspartate 66, and aspartate 97. Aspartate 97 provides a ligand contact to Mg(2+).

The protein belongs to the MobA family. Monomer. Requires Mg(2+) as cofactor.

It is found in the cytoplasm. It catalyses the reaction Mo-molybdopterin + GTP + H(+) = Mo-molybdopterin guanine dinucleotide + diphosphate. Transfers a GMP moiety from GTP to Mo-molybdopterin (Mo-MPT) cofactor (Moco or molybdenum cofactor) to form Mo-molybdopterin guanine dinucleotide (Mo-MGD) cofactor. The protein is Molybdenum cofactor guanylyltransferase of Campylobacter jejuni subsp. jejuni serotype O:2 (strain ATCC 700819 / NCTC 11168).